A 142-amino-acid polypeptide reads, in one-letter code: Hemoglobin subunit alpha-A (142 aa).

The Globin domain maps to V2–R142. H59 contributes to the O2 binding site. Residue H88 coordinates heme b.

It belongs to the globin family. In terms of assembly, heterotetramer of two alpha chains and two beta chains. Red blood cells.

In terms of biological role, involved in oxygen transport from the lung to the various peripheral tissues. This chain is Hemoglobin subunit alpha-A (HBAA), found in Gallus gallus (Chicken).